The chain runs to 368 residues: Histidinol-phosphate aminotransferase (368 aa).

An N6-(pyridoxal phosphate)lysine modification is found at Lys-226.

It belongs to the class-II pyridoxal-phosphate-dependent aminotransferase family. Histidinol-phosphate aminotransferase subfamily. Homodimer. Requires pyridoxal 5'-phosphate as cofactor.

The catalysed reaction is L-histidinol phosphate + 2-oxoglutarate = 3-(imidazol-4-yl)-2-oxopropyl phosphate + L-glutamate. The protein operates within amino-acid biosynthesis; L-histidine biosynthesis; L-histidine from 5-phospho-alpha-D-ribose 1-diphosphate: step 7/9. This chain is Histidinol-phosphate aminotransferase, found in Colwellia psychrerythraea (strain 34H / ATCC BAA-681) (Vibrio psychroerythus).